Reading from the N-terminus, the 594-residue chain is Putative diflavin flavoprotein A 4 (594 aa).

Positions 57 to 250 (RRGTTSNSYL…LTLKMIAPGH (194 aa)) are zinc metallo-hydrolase. Positions 279–417 (VALIYASAYG…VCTTSGANFA (139 aa)) constitute a Flavodoxin-like domain. A flavodoxin-reductase-like region spans residues 445–594 (VGRIIGSIGV…IRHRKSGGQY (150 aa)).

In the N-terminal section; belongs to the zinc metallo-hydrolase group 3 family. This sequence in the C-terminal section; belongs to the flavodoxin reductase family. The cofactor is Fe cation.

Mediates electron transfer from NADH to oxygen, reducing it to water. This modular protein has 3 redox cofactors, in other organisms the same activity requires 2 or 3 proteins. This chain is Putative diflavin flavoprotein A 4 (dfa4), found in Synechocystis sp. (strain ATCC 27184 / PCC 6803 / Kazusa).